Consider the following 492-residue polypeptide: GMP reductase (492 aa).

Residues S30–R31 and R78 each bind NADP(+). 2 CBS domains span residues L99 to T162 and M164 to T223. Residues D260–A262 and V313–G314 contribute to the NADP(+) site. Positions 314, 316, and 319 each coordinate K(+). C319 serves as the catalytic Thioimidate intermediate. The active-site Proton donor/acceptor is the T321. R322 is a K(+) binding site. Residues D352–G354, G375–N376, and G401–A403 each bind GMP. NADP(+) contacts are provided by residues M402 and S454–S457. The short motif at S490–L492 is the Microbody targeting signal element.

The protein belongs to the IMPDH/GMPR family. GuaC type 1 subfamily. As to quaternary structure, homotetramer.

It is found in the glycosome. It carries out the reaction IMP + NH4(+) + NADP(+) = GMP + NADPH + 2 H(+). Its activity is regulated as follows. Activated by GTP and inhibited by XMP and the IMP analogs allopurinol nucleotide and thiopurinol nucleotide. Its function is as follows. Catalyzes the irreversible NADPH-dependent deamination of GMP to IMP. It functions in the conversion of nucleobase, nucleoside and nucleotide derivatives of G to A nucleotides, and in maintaining the intracellular balance of A and G nucleotides. In Leishmania donovani, this protein is GMP reductase.